Consider the following 231-residue polypeptide: Large ribosomal subunit protein uL1 (231 aa).

This sequence belongs to the universal ribosomal protein uL1 family. Part of the 50S ribosomal subunit.

Its function is as follows. Binds directly to 23S rRNA. The L1 stalk is quite mobile in the ribosome, and is involved in E site tRNA release. In terms of biological role, protein L1 is also a translational repressor protein, it controls the translation of the L11 operon by binding to its mRNA. This chain is Large ribosomal subunit protein uL1, found in Cupriavidus pinatubonensis (strain JMP 134 / LMG 1197) (Cupriavidus necator (strain JMP 134)).